The primary structure comprises 312 residues: DNA-directed RNA polymerase subunit alpha (312 aa).

The interval 1-226 (MIEFEKPKIT…DHLNLFVDLS (226 aa)) is alpha N-terminal domain (alpha-NTD). Residues 243–312 (TERVLDKIIE…ELGLSLKKRK (70 aa)) are alpha C-terminal domain (alpha-CTD).

Belongs to the RNA polymerase alpha chain family. Homodimer. The RNAP catalytic core consists of 2 alpha, 1 beta, 1 beta' and 1 omega subunit. When a sigma factor is associated with the core the holoenzyme is formed, which can initiate transcription.

The enzyme catalyses RNA(n) + a ribonucleoside 5'-triphosphate = RNA(n+1) + diphosphate. Its function is as follows. DNA-dependent RNA polymerase catalyzes the transcription of DNA into RNA using the four ribonucleoside triphosphates as substrates. This Lactococcus lactis subsp. cremoris (strain MG1363) protein is DNA-directed RNA polymerase subunit alpha.